We begin with the raw amino-acid sequence, 124 residues long: Quinol oxidase subunit 4 (124 aa).

The next 3 membrane-spanning stretches (helical) occupy residues 16–36, 44–64, and 78–98; these read IVGF…AVYT, LWII…MFMH, and TLFG…IFAA.

It belongs to the cytochrome c oxidase bacterial subunit 4 family.

The protein resides in the cell membrane. It carries out the reaction 2 a quinol + O2 = 2 a quinone + 2 H2O. Functionally, catalyzes quinol oxidation with the concomitant reduction of oxygen to water. Major component for energy conversion during vegetative growth. The polypeptide is Quinol oxidase subunit 4 (qoxD) (Bacillus subtilis (strain 168)).